We begin with the raw amino-acid sequence, 603 residues long: Threonine--tRNA ligase (603 aa).

Residues Asp209–Pro500 are catalytic. Positions 301, 352, and 477 each coordinate Zn(2+).

The protein belongs to the class-II aminoacyl-tRNA synthetase family. Homodimer. Zn(2+) is required as a cofactor.

It localises to the cytoplasm. The catalysed reaction is tRNA(Thr) + L-threonine + ATP = L-threonyl-tRNA(Thr) + AMP + diphosphate + H(+). In terms of biological role, catalyzes the attachment of threonine to tRNA(Thr) in a two-step reaction: L-threonine is first activated by ATP to form Thr-AMP and then transferred to the acceptor end of tRNA(Thr). Also edits incorrectly charged L-seryl-tRNA(Thr). The sequence is that of Threonine--tRNA ligase from Campylobacter lari (strain RM2100 / D67 / ATCC BAA-1060).